The primary structure comprises 934 residues: Sorting nexin-14 (934 aa).

The next 2 membrane-spanning stretches (helical) occupy residues 27 to 47 and 48 to 68; these read YPVIFCIFTVMISSTIILNQY and LHILMVFWSFLAGVITFYCSL. Residues 129–303 form the PXA domain; it reads PSKVDASISE…MVLIFIDDSP (175 aa). Positions 335–467 constitute an RGS domain; it reads DLKEIREQQD…CHSDEYFRHL (133 aa). A PX domain is found at 557-677; it reads WTISIPYVDF…DFLSPFSMES (121 aa).

This sequence belongs to the sorting nexin family.

It is found in the lysosome membrane. The protein localises to the late endosome membrane. Its subcellular location is the cell projection. The protein resides in the dendrite. Its function is as follows. Plays a role in maintaining normal neuronal excitability and synaptic transmission. May be involved in several stages of intracellular trafficking. Required for autophagosome clearance, possibly by mediating the fusion of lysosomes with autophagosomes. Binds phosphatidylinositol 3,5-bisphosphate (PtdIns(3,5)P2), a key component of late endosomes/lysosomes. Does not bind phosphatidylinositol 3-phosphate (PtdIns(3P)). This is Sorting nexin-14 from Danio rerio (Zebrafish).